Reading from the N-terminus, the 96-residue chain is Co-chaperonin GroES (96 aa).

This sequence belongs to the GroES chaperonin family. In terms of assembly, heptamer of 7 subunits arranged in a ring. Interacts with the chaperonin GroEL.

Its subcellular location is the cytoplasm. In terms of biological role, together with the chaperonin GroEL, plays an essential role in assisting protein folding. The GroEL-GroES system forms a nano-cage that allows encapsulation of the non-native substrate proteins and provides a physical environment optimized to promote and accelerate protein folding. GroES binds to the apical surface of the GroEL ring, thereby capping the opening of the GroEL channel. This Hyphomonas neptunium (strain ATCC 15444) protein is Co-chaperonin GroES.